The primary structure comprises 240 residues: Uridylate kinase (240 aa).

12-15 is an ATP binding site; sequence KLSG. Glycine 54 is a binding site for UMP. ATP is bound by residues glycine 55 and arginine 59. Residues aspartate 74 and 135–142 each bind UMP; that span reads TGNPFFTT. The ATP site is built by threonine 162, tyrosine 168, and aspartate 171.

The protein belongs to the UMP kinase family. As to quaternary structure, homohexamer.

Its subcellular location is the cytoplasm. The catalysed reaction is UMP + ATP = UDP + ADP. The protein operates within pyrimidine metabolism; CTP biosynthesis via de novo pathway; UDP from UMP (UMPK route): step 1/1. Inhibited by UTP. Functionally, catalyzes the reversible phosphorylation of UMP to UDP. The chain is Uridylate kinase from Xanthomonas campestris pv. campestris (strain ATCC 33913 / DSM 3586 / NCPPB 528 / LMG 568 / P 25).